Reading from the N-terminus, the 315-residue chain is tRNA U34 carboxymethyltransferase (315 aa).

Carboxy-S-adenosyl-L-methionine-binding positions include lysine 79, tryptophan 93, lysine 98, glycine 117, 142–144 (DPS), 169–170 (VE), tyrosine 193, and arginine 307.

Belongs to the class I-like SAM-binding methyltransferase superfamily. CmoB family. As to quaternary structure, homotetramer.

It catalyses the reaction carboxy-S-adenosyl-L-methionine + 5-hydroxyuridine(34) in tRNA = 5-carboxymethoxyuridine(34) in tRNA + S-adenosyl-L-homocysteine + H(+). In terms of biological role, catalyzes carboxymethyl transfer from carboxy-S-adenosyl-L-methionine (Cx-SAM) to 5-hydroxyuridine (ho5U) to form 5-carboxymethoxyuridine (cmo5U) at position 34 in tRNAs. The chain is tRNA U34 carboxymethyltransferase from Helicobacter hepaticus (strain ATCC 51449 / 3B1).